Here is a 225-residue protein sequence, read N- to C-terminus: MSANELPASAQSLQEQFLGSFVTRKLLLHDPFDHNSLRVFAVAPSPLITHENNLKGNVLMLLSVLICGIICCLGLHYIIRCAFRRSSRFMISEPISSLSTPRSSSNKGIKKKALRMFPVVSYSREMNLPGIGEECVICLSDFVSGEQLRLLPKCNHGFHVRCIDKWLQHHLTCPKCRHCLVETCQKILGDFSQADSMASTPTESVIVRIDPLEPEGRVNTFRESS.

The chain crosses the membrane as a helical span at residues 59-79 (LMLLSVLICGIICCLGLHYII). Residues 135-177 (CVICLSDFVSGEQLRLLPKCNHGFHVRCIDKWLQHHLTCPKCR) form an RING-type; atypical zinc finger.

Belongs to the RING-type zinc finger family. ATL subfamily.

The protein localises to the membrane. It carries out the reaction S-ubiquitinyl-[E2 ubiquitin-conjugating enzyme]-L-cysteine + [acceptor protein]-L-lysine = [E2 ubiquitin-conjugating enzyme]-L-cysteine + N(6)-ubiquitinyl-[acceptor protein]-L-lysine.. It functions in the pathway protein modification; protein ubiquitination. E3 ubiquitin-protein ligase able to catalyze polyubiquitination with ubiquitin-conjugating enzyme E2 UBC8 in vitro. This is E3 ubiquitin-protein ligase ATL76 (ATL76) from Arabidopsis thaliana (Mouse-ear cress).